A 495-amino-acid chain; its full sequence is Non-structural protein 1 (495 aa).

The RNA-binding stretch occupies residues M1–L81. Residues C42–H79 are zinc-binding domain. The tract at residues K82–N177 is important for cytoskeleton localization. The tract at residues D320–E495 is interaction with host IRF3. Positions L485 to S488 match the pLxIS motif motif.

This sequence belongs to the rotavirus NSP1 family. Interacts (via C-terminus) with host IRF3; this interaction leads to IRF3 degradation. Interacts with host IRF7; this interaction leads to IRF7 degradation. Interacts with host CUL1 and CUL3.

The protein resides in the host cytoplasm. It localises to the host cytoskeleton. In terms of biological role, plays a role in the inhibition of host innate immunity by inducing the degradation of key host factors required to activate interferon production such as IRF3, IRF5 or IRF7. Associates with components of cullin RING ligases (CRLs) including CUL1 or CUL3, which are essential multisubunit ubiquitination complexes, to modulate their activities. This Macaca mulatta (Rhesus macaque) protein is Non-structural protein 1.